Reading from the N-terminus, the 92-residue chain is Protein S100-B (92 aa).

N-acetylserine is present on S2. 2 EF-hand domains span residues D13 to I48 and K49 to A84. H16 contacts Zn(2+). 3 residues coordinate Ca(2+): S19, E22, and D24. H26 serves as a coordination point for Zn(2+). Ca(2+) is bound by residues D62, D64, D66, E68, and E73. Positions 86 and 91 each coordinate Zn(2+).

The protein belongs to the S-100 family. In terms of assembly, dimer of either two alpha chains, or two beta chains, or one alpha and one beta chain. The S100B dimer binds two molecules of STK38. Interacts with CACYBP in a calcium-dependent manner. Interacts with ATAD3A; this interaction probably occurs in the cytosol prior to ATAD3A mitochondrial targeting. Interacts with S100A6. The S100B dimer interacts with two molecules of CAPZA1. Interacts with AGER. Interacts with PPP5C (via TPR repeats); the interaction is calcium-dependent and modulates PPP5C activity. Interacts with TPPP; this interaction inhibits TPPP dimerization. Interacts with isoform CLSTN3beta of CLSTN3; interaction promotes secretion.

It localises to the cytoplasm. It is found in the nucleus. The protein resides in the secreted. Small zinc- and- and calcium-binding protein that is highly expressed in astrocytes and constitutes one of the most abundant soluble proteins in brain. Weakly binds calcium but binds zinc very tightly-distinct binding sites with different affinities exist for both ions on each monomer. Physiological concentrations of potassium ion antagonize the binding of both divalent cations, especially affecting high-affinity calcium-binding sites. Acts as a neurotrophic factor that promotes astrocytosis and axonal proliferation. Involved in innervation of thermogenic adipose tissue by acting as an adipocyte-derived neurotrophic factor that promotes sympathetic innervation of adipose tissue. Binds to and initiates the activation of STK38 by releasing autoinhibitory intramolecular interactions within the kinase. Interaction with AGER after myocardial infarction may play a role in myocyte apoptosis by activating ERK1/2 and p53/TP53 signaling. Could assist ATAD3A cytoplasmic processing, preventing aggregation and favoring mitochondrial localization. May mediate calcium-dependent regulation on many physiological processes by interacting with other proteins, such as TPR-containing proteins, and modulating their activity. In Bos taurus (Bovine), this protein is Protein S100-B (S100B).